The following is a 321-amino-acid chain: Ribose-phosphate pyrophosphokinase (321 aa).

Residues 44 to 46 and 103 to 104 each bind ATP; these read DGE and RQ. 2 residues coordinate Mg(2+): H137 and D179. Residue K202 is part of the active site. D-ribose 5-phosphate contacts are provided by residues R204, D228, and 232 to 236; that span reads DTAGT.

This sequence belongs to the ribose-phosphate pyrophosphokinase family. Class I subfamily. Homohexamer. Mg(2+) is required as a cofactor.

It is found in the cytoplasm. The enzyme catalyses D-ribose 5-phosphate + ATP = 5-phospho-alpha-D-ribose 1-diphosphate + AMP + H(+). It participates in metabolic intermediate biosynthesis; 5-phospho-alpha-D-ribose 1-diphosphate biosynthesis; 5-phospho-alpha-D-ribose 1-diphosphate from D-ribose 5-phosphate (route I): step 1/1. Its function is as follows. Involved in the biosynthesis of the central metabolite phospho-alpha-D-ribosyl-1-pyrophosphate (PRPP) via the transfer of pyrophosphoryl group from ATP to 1-hydroxyl of ribose-5-phosphate (Rib-5-P). The protein is Ribose-phosphate pyrophosphokinase of Staphylococcus saprophyticus subsp. saprophyticus (strain ATCC 15305 / DSM 20229 / NCIMB 8711 / NCTC 7292 / S-41).